A 610-amino-acid chain; its full sequence is Elongation factor 4 (610 aa).

The tr-type G domain maps to 11-193; it reads ENIRNFSIIA…QIVEKVPAPS (183 aa). GTP-binding positions include 23–28 and 140–143; these read DHGKST and NKID.

It belongs to the TRAFAC class translation factor GTPase superfamily. Classic translation factor GTPase family. LepA subfamily.

It localises to the cell membrane. It carries out the reaction GTP + H2O = GDP + phosphate + H(+). Functionally, required for accurate and efficient protein synthesis under certain stress conditions. May act as a fidelity factor of the translation reaction, by catalyzing a one-codon backward translocation of tRNAs on improperly translocated ribosomes. Back-translocation proceeds from a post-translocation (POST) complex to a pre-translocation (PRE) complex, thus giving elongation factor G a second chance to translocate the tRNAs correctly. Binds to ribosomes in a GTP-dependent manner. In Streptococcus equi subsp. equi (strain 4047), this protein is Elongation factor 4.